A 528-amino-acid chain; its full sequence is Protein HPH2 (528 aa).

The span at 1–13 shows a compositional bias: low complexity; the sequence is MQNAQIKSSSKGS. 4 disordered regions span residues 1-52, 170-193, 230-257, and 270-334; these read MQNA…STVE, AQQH…PSRS, ILPN…STQT, and ESSP…QSVA. The segment covering 17 to 36 has biased composition (basic and acidic residues); the sequence is GTDRNSKDGVEKRPLEDVKQ. Composition is skewed to low complexity over residues 283-296 and 308-332; these read PSVA…VANP and SFSQ…FSQS. A helical transmembrane segment spans residues 505–521; that stretch reads ALDIVFLIIIIVICYTF.

As to quaternary structure, interacts with HPH1/FRT1. Phosphorylated by CDC28.

The protein resides in the endoplasmic reticulum membrane. In terms of biological role, required for growth under high NaCl, alkaline pH and cell wall stress. In Saccharomyces cerevisiae (strain ATCC 204508 / S288c) (Baker's yeast), this protein is Protein HPH2 (FRT2).